A 304-amino-acid polypeptide reads, in one-letter code: Acetyl-coenzyme A carboxylase carboxyl transferase subunit beta (304 aa).

Residues 25–294 (VWTKCDSCGQ…PSVVESKADT (270 aa)) enclose the CoA carboxyltransferase N-terminal domain. Residues cysteine 29, cysteine 32, cysteine 48, and cysteine 51 each coordinate Zn(2+). A C4-type zinc finger spans residues 29-51 (CDSCGQVLYRAELERNLEVCPKC).

It belongs to the AccD/PCCB family. Acetyl-CoA carboxylase is a heterohexamer composed of biotin carboxyl carrier protein (AccB), biotin carboxylase (AccC) and two subunits each of ACCase subunit alpha (AccA) and ACCase subunit beta (AccD). Zn(2+) is required as a cofactor.

Its subcellular location is the cytoplasm. The enzyme catalyses N(6)-carboxybiotinyl-L-lysyl-[protein] + acetyl-CoA = N(6)-biotinyl-L-lysyl-[protein] + malonyl-CoA. It participates in lipid metabolism; malonyl-CoA biosynthesis; malonyl-CoA from acetyl-CoA: step 1/1. Component of the acetyl coenzyme A carboxylase (ACC) complex. Biotin carboxylase (BC) catalyzes the carboxylation of biotin on its carrier protein (BCCP) and then the CO(2) group is transferred by the transcarboxylase to acetyl-CoA to form malonyl-CoA. The protein is Acetyl-coenzyme A carboxylase carboxyl transferase subunit beta of Yersinia pestis bv. Antiqua (strain Nepal516).